The following is a 305-amino-acid chain: MAQVKRIRRNVSGIILLDKPLGFTSNAALQKVRWLLNAEKAGHTGSLDPLATGVLPLCFGEATKFSQYLLDSDKGYETLAQLGKTTTTADAEGEVLQERPVTVGQADIEAVLPKFRGQISQIPPMYSALKRDGQPLYKLARAGEVVEREPRSVTIARLELLAFEGDTARLAVDCSKGTYIRTLVEDIGEQLGCGAYVAELRRTQAGPFTLAQTVTLEELEAVHAEGGNEAVDRFLMPSDSGLQDWPLLQFSEASAFYWLNGQPVRAPDAPKFGMVRVQDHNGRFIGIGEVSEDGRIAPRRLIRSE.

Aspartate 48 serves as the catalytic Nucleophile.

It belongs to the pseudouridine synthase TruB family. Type 1 subfamily.

The enzyme catalyses uridine(55) in tRNA = pseudouridine(55) in tRNA. Responsible for synthesis of pseudouridine from uracil-55 in the psi GC loop of transfer RNAs. This chain is tRNA pseudouridine synthase B, found in Pseudomonas fluorescens (strain Pf0-1).